Consider the following 100-residue polypeptide: Small ribosomal subunit protein uS14 (100 aa).

This sequence belongs to the universal ribosomal protein uS14 family. Part of the 30S ribosomal subunit. Contacts proteins S3 and S10.

In terms of biological role, binds 16S rRNA, required for the assembly of 30S particles and may also be responsible for determining the conformation of the 16S rRNA at the A site. The protein is Small ribosomal subunit protein uS14 of Prochlorococcus marinus (strain MIT 9211).